A 162-amino-acid polypeptide reads, in one-letter code: Class I hydrophobin 3 (162 aa).

Cystine bridges form between Cys36–Cys150 and Cys151–Cys159.

Belongs to the fungal hydrophobin family. As to quaternary structure, self-assembles to form functional amyloid fibrils called rodlets. Self-assembly into fibrillar rodlets occurs spontaneously at hydrophobic:hydrophilic interfaces and the rodlets further associate laterally to form amphipathic monolayers.

The protein localises to the secreted. Its subcellular location is the cell wall. Aerial growth, conidiation, and dispersal of filamentous fungi in the environment rely upon a capability of their secreting small amphipathic proteins called hydrophobins (HPBs) with low sequence identity. Class I can self-assemble into an outermost layer of rodlet bundles on aerial cell surfaces, conferring cellular hydrophobicity that supports fungal growth, development and dispersal; whereas Class II form highly ordered films at water-air interfaces through intermolecular interactions but contribute nothing to the rodlet structure. The sequence is that of Class I hydrophobin 3 from Coprinopsis cinerea (strain Okayama-7 / 130 / ATCC MYA-4618 / FGSC 9003) (Inky cap fungus).